The following is a 199-amino-acid chain: 3-isopropylmalate dehydratase small subunit (199 aa).

The protein belongs to the LeuD family. LeuD type 1 subfamily. As to quaternary structure, heterodimer of LeuC and LeuD.

It carries out the reaction (2R,3S)-3-isopropylmalate = (2S)-2-isopropylmalate. Its pathway is amino-acid biosynthesis; L-leucine biosynthesis; L-leucine from 3-methyl-2-oxobutanoate: step 2/4. Its function is as follows. Catalyzes the isomerization between 2-isopropylmalate and 3-isopropylmalate, via the formation of 2-isopropylmaleate. This is 3-isopropylmalate dehydratase small subunit from Kocuria rhizophila (strain ATCC 9341 / DSM 348 / NBRC 103217 / DC2201).